Consider the following 459-residue polypeptide: Ribulose bisphosphate carboxylase (459 aa).

Residue N111 participates in substrate binding. The active-site Proton acceptor is K166. A substrate-binding site is contributed by K168. K191, D193, and E194 together coordinate Mg(2+). Position 191 is an N6-carboxylysine (K191). H287 (proton acceptor) is an active-site residue. Substrate contacts are provided by R288, H321, and S368.

It belongs to the RuBisCO large chain family. Type II subfamily. In terms of assembly, the complex is approximately 350 kDa when isolated from either T.denitrificans or R.sphaeroides, suggesting a homohexamer or homooctamer structure. Mg(2+) is required as a cofactor.

The catalysed reaction is 2 (2R)-3-phosphoglycerate + 2 H(+) = D-ribulose 1,5-bisphosphate + CO2 + H2O. The enzyme catalyses D-ribulose 1,5-bisphosphate + O2 = 2-phosphoglycolate + (2R)-3-phosphoglycerate + 2 H(+). Its function is as follows. RuBisCO catalyzes two reactions: the carboxylation of D-ribulose 1,5-bisphosphate, the primary event in carbon dioxide fixation, as well as the oxidative fragmentation of the pentose substrate. Both reactions occur simultaneously and in competition at the same active site. The chain is Ribulose bisphosphate carboxylase (cbbM) from Thiobacillus denitrificans (strain ATCC 25259 / T1).